The sequence spans 119 residues: uncharacterized protein (119 aa).

The disordered stretch occupies residues 67–119 (LGLKEVQKKSNEGLNEVQGVADINKQKRPANSQDSSSVEGDIQNFLEKVTGKN). Residues 95–104 (PANSQDSSSV) are compositionally biased toward polar residues.

This is an uncharacterized protein from Anabaena variabilis.